A 20-amino-acid polypeptide reads, in one-letter code: Blooming-related protein 2 (20 aa).

The disordered stretch occupies residues 1–20 (VSAEYLERQGPKDDXDCFDD).

Its function is as follows. Possible 'checkpoint' protein for cell division in the blooming process. This chain is Blooming-related protein 2, found in Prorocentrum triestinum (Red tide alga).